Reading from the N-terminus, the 238-residue chain is Segregation and condensation protein A (238 aa).

This sequence belongs to the ScpA family. As to quaternary structure, component of a cohesin-like complex composed of ScpA, ScpB and the Smc homodimer, in which ScpA and ScpB bind to the head domain of Smc. The presence of the three proteins is required for the association of the complex with DNA.

It is found in the cytoplasm. Its function is as follows. Participates in chromosomal partition during cell division. May act via the formation of a condensin-like complex containing Smc and ScpB that pull DNA away from mid-cell into both cell halves. The chain is Segregation and condensation protein A from Macrococcus caseolyticus (strain JCSC5402) (Macrococcoides caseolyticum).